Reading from the N-terminus, the 229-residue chain is Enolase-phosphatase E1 (229 aa).

It belongs to the HAD-like hydrolase superfamily. MasA/MtnC family. As to quaternary structure, monomer. Requires Mg(2+) as cofactor.

The enzyme catalyses 5-methylsulfanyl-2,3-dioxopentyl phosphate + H2O = 1,2-dihydroxy-5-(methylsulfanyl)pent-1-en-3-one + phosphate. It participates in amino-acid biosynthesis; L-methionine biosynthesis via salvage pathway; L-methionine from S-methyl-5-thio-alpha-D-ribose 1-phosphate: step 3/6. It functions in the pathway amino-acid biosynthesis; L-methionine biosynthesis via salvage pathway; L-methionine from S-methyl-5-thio-alpha-D-ribose 1-phosphate: step 4/6. In terms of biological role, bifunctional enzyme that catalyzes the enolization of 2,3-diketo-5-methylthiopentyl-1-phosphate (DK-MTP-1-P) into the intermediate 2-hydroxy-3-keto-5-methylthiopentenyl-1-phosphate (HK-MTPenyl-1-P), which is then dephosphorylated to form the acireductone 1,2-dihydroxy-3-keto-5-methylthiopentene (DHK-MTPene). In Yersinia pestis (strain Pestoides F), this protein is Enolase-phosphatase E1.